A 201-amino-acid chain; its full sequence is Lipopolysaccharide core heptose(II)-phosphate phosphatase (201 aa).

Residues 1 to 35 (MLAFTLRFIKNKRYLATLAGALVIIAGLTSQHAWS) form the signal peptide.

The protein belongs to the phosphoglycerate mutase family. Ais subfamily.

The protein resides in the periplasm. It participates in bacterial outer membrane biogenesis; lipopolysaccharide metabolism. In terms of biological role, catalyzes the dephosphorylation of heptose(II) of the outer membrane lipopolysaccharide core. The chain is Lipopolysaccharide core heptose(II)-phosphate phosphatase from Salmonella choleraesuis (strain SC-B67).